We begin with the raw amino-acid sequence, 261 residues long: DNA repair protein RecO (261 aa).

This sequence belongs to the RecO family.

In terms of biological role, involved in DNA repair and RecF pathway recombination. This chain is DNA repair protein RecO, found in Chlorobium phaeobacteroides (strain BS1).